A 358-amino-acid chain; its full sequence is Phospho-N-acetylmuramoyl-pentapeptide-transferase (358 aa).

Transmembrane regions (helical) follow at residues 19-39, 71-91, 95-115, 126-146, 166-186, 194-214, 237-257, 261-281, 286-306, and 336-356; these read YLTL…VLIG, TMGG…WADL, YVWV…IDDY, LIAR…ALYL, VMPQ…VGTS, GLDG…AIFA, LVIV…FNTY, VFMG…IAVL, IVLV…ILQV, and VIVR…ATLK.

Belongs to the glycosyltransferase 4 family. MraY subfamily. The cofactor is Mg(2+).

Its subcellular location is the cell inner membrane. The enzyme catalyses UDP-N-acetyl-alpha-D-muramoyl-L-alanyl-gamma-D-glutamyl-meso-2,6-diaminopimeloyl-D-alanyl-D-alanine + di-trans,octa-cis-undecaprenyl phosphate = di-trans,octa-cis-undecaprenyl diphospho-N-acetyl-alpha-D-muramoyl-L-alanyl-D-glutamyl-meso-2,6-diaminopimeloyl-D-alanyl-D-alanine + UMP. It functions in the pathway cell wall biogenesis; peptidoglycan biosynthesis. In terms of biological role, catalyzes the initial step of the lipid cycle reactions in the biosynthesis of the cell wall peptidoglycan: transfers peptidoglycan precursor phospho-MurNAc-pentapeptide from UDP-MurNAc-pentapeptide onto the lipid carrier undecaprenyl phosphate, yielding undecaprenyl-pyrophosphoryl-MurNAc-pentapeptide, known as lipid I. In Pseudoalteromonas atlantica (strain T6c / ATCC BAA-1087), this protein is Phospho-N-acetylmuramoyl-pentapeptide-transferase.